Consider the following 686-residue polypeptide: Eukaryotic translation initiation factor 3 subunit B (686 aa).

A disordered region spans residues 1–29 (MAKKHAGADANDSDYNEEPNFEDPPGFVD). The segment covering 11–21 (NDSDYNEEPNF) has biased composition (acidic residues). Residues 53 to 137 (SVVVVDNIPK…HTFAVNLFTD (85 aa)) form the RRM domain. 5 WD repeats span residues 203 to 242 (TRER…KIQK), 289 to 327 (DGMS…LLDL), 330 to 365 (IKIP…TLME), 438 to 480 (EIRE…KPSL), and 526 to 571 (PDHF…IKRT). Residues 590-642 (AEEKQKEIKKNLKKYYAVFEQKDRLRLTRASKELLEKRAQLRETFMEYRNKRI) are a coiled coil.

It belongs to the eIF-3 subunit B family. As to quaternary structure, component of the eukaryotic translation initiation factor 3 (eIF-3) complex. The eIF-3 complex interacts with pix. Interacts with mxt.

The protein resides in the cytoplasm. RNA-binding component of the eukaryotic translation initiation factor 3 (eIF-3) complex, which is involved in protein synthesis of a specialized repertoire of mRNAs and, together with other initiation factors, stimulates binding of mRNA and methionyl-tRNAi to the 40S ribosome. The eIF-3 complex specifically targets and initiates translation of a subset of mRNAs involved in cell proliferation. In Drosophila ananassae (Fruit fly), this protein is Eukaryotic translation initiation factor 3 subunit B.